A 236-amino-acid polypeptide reads, in one-letter code: Mitochondrial-abundant heat soluble protein (236 aa).

A mitochondrion-targeting transit peptide spans 1-73; it reads MSRYLLRDVQ…AARAGVVLRG (73 aa). 2 disordered regions span residues 102–135 and 165–209; these read RIHS…NEAA and RSNG…EIVA. Composition is skewed to polar residues over residues 105–126 and 192–202; these read SQSS…NSPQ and APDSSKNTKSV. Positions 126 to 143 match the MAHS motif motif; sequence QPEGKANEAAERAKQFMN.

It localises to the mitochondrion. Functionally, mitochondrial heat soluble protein acting as a molecular shield in water-deficient condition. The sequence is that of Mitochondrial-abundant heat soluble protein from Ramazzottius varieornatus (Water bear).